A 318-amino-acid chain; its full sequence is tRNA-modifying protein YgfZ (318 aa).

Folate contacts are provided by W28 and W182.

Belongs to the tRNA-modifying YgfZ family.

Its subcellular location is the cytoplasm. Folate-binding protein involved in regulating the level of ATP-DnaA and in the modification of some tRNAs. It is probably a key factor in regulatory networks that act via tRNA modification, such as initiation of chromosomal replication. The polypeptide is tRNA-modifying protein YgfZ (Aliivibrio fischeri (strain MJ11) (Vibrio fischeri)).